We begin with the raw amino-acid sequence, 115 residues long: Chaperone protein PrsD (115 aa).

It belongs to the periplasmic pilus chaperone family.

It localises to the periplasm. Mediates assembly of pili by forming soluble multimeric complexes with pili subunits as an intermediate step in the assembly process. The chain is Chaperone protein PrsD (prsD) from Escherichia coli.